Consider the following 408-residue polypeptide: Substance-P receptor (408 aa).

Topologically, residues 1-32 (MNSNISAQNDSALNSTIQNGTKINQFIQPPWQ) are extracellular. 4 N-linked (GlcNAc...) asparagine glycosylation sites follow: Asn4, Asn9, Asn14, and Asn19. A helical membrane pass occupies residues 33–55 (IALWSVAYSIIVIVSLVGNIIVM). Residues 56–65 (WIIIAHKRMR) are Cytoplasmic-facing. Residues 66-87 (TVTNYFLVNLAFAEASMSAFNT) traverse the membrane as a helical segment. Topologically, residues 88 to 107 (VINFTYAIHNHWYYGLIYCK) are extracellular. Residues Cys106 and Cys181 are joined by a disulfide bond. Residues 108 to 129 (FHNFFPISAVFTSIYSMTAIAL) form a helical membrane-spanning segment. Topologically, residues 130–149 (DRYMAIIHPLKPRLSATATK) are cytoplasmic. A helical membrane pass occupies residues 150–170 (IVICVIWSFSFCMAFPLGYYA). Residues 171-196 (DVYPMEGGDICYLNWPDSEENRKYEQ) are Extracellular-facing. The helical transmembrane segment at 197-221 (VYQVLVFCLIYILPLLVIGCAYTFI) threads the bilayer. Residues 222–250 (GMTLWASEIPGDSSDRYHEQVVAKRKVVK) are Cytoplasmic-facing. Residues 251–272 (MMIVVVCTFAICWLPFHIFFLL) form a helical membrane-spanning segment. Over 273–283 (QTLHEMTQKFY) the chain is Extracellular. The helical transmembrane segment at 284-308 (QQFYLAIMWLAMSSTMYNPIIYCCL) threads the bilayer. The Cytoplasmic segment spans residues 309-408 (NDRFRIGFKH…SSSFYSNNLA (100 aa)). Cys323 carries S-palmitoyl cysteine lipidation. The segment at 366 to 408 (DEEAEENGKSSKRLSLDLTSNGSSRSVCKTMSDSSSFYSNNLA) is disordered. A compositionally biased stretch (polar residues) spans 382–408 (DLTSNGSSRSVCKTMSDSSSFYSNNLA).

It belongs to the G-protein coupled receptor 1 family.

It localises to the cell membrane. In terms of biological role, this is a receptor for the tachykinin neuropeptide substance P. It is probably associated with G proteins that activate a phosphatidylinositol-calcium second messenger system. The polypeptide is Substance-P receptor (TACR1) (Aquarana catesbeiana (American bullfrog)).